The chain runs to 542 residues: Sterile alpha motif domain-containing protein 11 (542 aa).

The segment at 268-364 (LLALPPQGPP…GRGLLSGSTL (97 aa)) is disordered. Residues 273-285 (PQGPPGPGPPIPP) show a composition bias toward pro residues. Residue threonine 342 is modified to Phosphothreonine. One can recognise an SAM domain in the interval 404–469 (WTVDDVCNFV…AQVAKRLGRV (66 aa)). Residues 486 to 542 (LQAPELSPGHQPLSPATTTSPYEGTHLPTGQASPKQENGSGTIALLSGAPDPSQLLQ) are disordered. Phosphoserine is present on serine 499. Residues 499–526 (SPATTTSPYEGTHLPTGQASPKQENGSG) show a composition bias toward polar residues.

Self-associates. Component of a Polycomb group (PcG) multiprotein PRC1-like complex. Interacts with SAMD7 and PHC2. Expressed in the outer nuclear layer of rod photoreceptors in the retina (at protein level). Predominantly expressed in retinal photoreceptors and pineal gland.

It is found in the nucleus. Its function is as follows. Component of a Polycomb group (PcG) multiprotein PRC1-like complex, essential for establishing rod photoreceptor cell identity and function by silencing nonrod gene expression in developing rod photoreceptor cells. This Mus musculus (Mouse) protein is Sterile alpha motif domain-containing protein 11 (Samd11).